The primary structure comprises 433 residues: Polygalacturonase ADPG2 (433 aa).

The N-terminal stretch at 1–24 (MARCTNLVTVFLLWALLMFSWCKA) is a signal peptide. PbH1 repeat units follow at residues 223–249 (CSNVQVSNVVVTAPADSPNTDGIHITN), 250–271 (TQNIRVSESIIGTGDDCISIES), 273–293 (SQNVQINDITCGPGHGISIGS), 303–324 (VSGVTVDGAKLSGTDNGVRIKT), and 332–353 (ASNIIFQNIQMDNVKNPIIIDQ). The active-site Proton donor is Asp264. Residue His287 is part of the active site.

The protein belongs to the glycosyl hydrolase 28 family. Expressed in roots and in the abscission zone of the sepals, petals and stamens of flowers, at the base of cauline leaves and in the basal cell of trichomes from senescing leaves. Found at the site of lateral root emergence, in the dehiscence zone of anthers and maturing siliques. Also expressed early in anther development, at the time of microspore separation. Expressed in germinating seeds, at the point at which the radicle broke through the seed coat. Not expressed at the junction between the seed and the funiculus or in the dehiscence zone of anthers or pods.

It is found in the secreted. The protein localises to the cell wall. It carries out the reaction (1,4-alpha-D-galacturonosyl)n+m + H2O = (1,4-alpha-D-galacturonosyl)n + (1,4-alpha-D-galacturonosyl)m.. Its function is as follows. Polygalacturonase involved in cell separation in the final stages of pod shatter, in anther dehiscence and in floral organ abscission. The sequence is that of Polygalacturonase ADPG2 (ADPG2) from Arabidopsis thaliana (Mouse-ear cress).